A 577-amino-acid chain; its full sequence is Type I restriction enzyme MjaVII methylase subunit (577 aa).

S-adenosyl-L-methionine contacts are provided by residues 251–256 (EVYTPV), 281–283 (SGT), Glu306, and 335–336 (DS).

Belongs to the N4/N6-methyltransferase family. In terms of assembly, the type I restriction/modification system is composed of three polypeptides R, M and S.

It catalyses the reaction a 2'-deoxyadenosine in DNA + S-adenosyl-L-methionine = an N(6)-methyl-2'-deoxyadenosine in DNA + S-adenosyl-L-homocysteine + H(+). In terms of biological role, the subtype gamma methyltransferase (M) subunit of a type I restriction enzyme. The M and S subunits together form a methyltransferase (MTase) that methylates A-3 on the top and bottom strands of the sequence 5'-CAAN(7)TGG-3'. In the presence of the R subunit the complex can also act as an endonuclease, binding to the same target sequence but cutting the DNA some distance from this site. Whether the DNA is cut or modified depends on the methylation state of the target sequence. When the target site is unmodified, the DNA is cut. When the target site is hemimethylated, the complex acts as a maintenance MTase modifying the DNA so that both strands become methylated. After locating a non-methylated recognition site, the enzyme complex serves as a molecular motor that translocates DNA in an ATP-dependent manner until a collision occurs that triggers cleavage. The polypeptide is Type I restriction enzyme MjaVII methylase subunit (Methanocaldococcus jannaschii (strain ATCC 43067 / DSM 2661 / JAL-1 / JCM 10045 / NBRC 100440) (Methanococcus jannaschii)).